A 226-amino-acid chain; its full sequence is HTH-type transcriptional regulator TcmR (226 aa).

The span at 1 to 16 (MDSAETDTPSTRSTPN) shows a compositional bias: polar residues. Residues 1–25 (MDSAETDTPSTRSTPNGPGLRQRKL) are disordered. Positions 26-86 (RRTRDQLIRE…TPISAIDEAF (61 aa)) constitute an HTH tetR-type domain. A DNA-binding region (H-T-H motif) is located at residues 49–68 (TVEQIAEAVEVHPRTFFRHF).

It functions in the pathway antibiotic biosynthesis; tetracenomycin C biosynthesis. Its function is as follows. Represses transcription of the divergently oriented tcmR and tcmA (tetracenomycin C resistance and export) genes by binding to an intergenic operator region. This binding is inhibited by tetracenomycin C. In Streptomyces glaucescens, this protein is HTH-type transcriptional regulator TcmR (tcmR).